A 119-amino-acid chain; its full sequence is Holo-[acyl-carrier-protein] synthase (119 aa).

Positions 8 and 58 each coordinate Mg(2+).

It belongs to the P-Pant transferase superfamily. AcpS family. Mg(2+) serves as cofactor.

It localises to the cytoplasm. It carries out the reaction apo-[ACP] + CoA = holo-[ACP] + adenosine 3',5'-bisphosphate + H(+). Functionally, transfers the 4'-phosphopantetheine moiety from coenzyme A to a Ser of acyl-carrier-protein. The chain is Holo-[acyl-carrier-protein] synthase from Lactobacillus johnsonii (strain CNCM I-12250 / La1 / NCC 533).